A 446-amino-acid polypeptide reads, in one-letter code: ATP-dependent protease ATPase subunit HslU (446 aa).

ATP-binding positions include valine 17, 59-64, aspartate 255, glutamate 320, and arginine 392; that span reads GVGKTE.

Belongs to the ClpX chaperone family. HslU subfamily. A double ring-shaped homohexamer of HslV is capped on each side by a ring-shaped HslU homohexamer. The assembly of the HslU/HslV complex is dependent on binding of ATP.

The protein localises to the cytoplasm. Functionally, ATPase subunit of a proteasome-like degradation complex; this subunit has chaperone activity. The binding of ATP and its subsequent hydrolysis by HslU are essential for unfolding of protein substrates subsequently hydrolyzed by HslV. HslU recognizes the N-terminal part of its protein substrates and unfolds these before they are guided to HslV for hydrolysis. The chain is ATP-dependent protease ATPase subunit HslU from Azotobacter vinelandii (strain DJ / ATCC BAA-1303).